The sequence spans 2021 residues: U3 small nucleolar RNA-associated protein 10 (2021 aa).

HEAT repeat units lie at residues 837 to 875 (PVDF…GEGM), 976 to 1014 (TSIL…YVQA), 1281 to 1319 (EKTV…FTDM), 1935 to 1973 (ENVL…AQAE), and 1977 to 2015 (GLVP…VTGS).

The protein belongs to the HEATR1/UTP10 family. Component of the ribosomal small subunit (SSU) processome.

It localises to the nucleus. The protein resides in the nucleolus. In terms of biological role, involved in nucleolar processing of pre-18S ribosomal RNA. Involved in ribosome biosynthesis. This is U3 small nucleolar RNA-associated protein 10 (UTP10) from Cryptococcus neoformans var. neoformans serotype D (strain B-3501A) (Filobasidiella neoformans).